The sequence spans 62 residues: Photosystem II reaction center protein Z (62 aa).

Transmembrane regions (helical) follow at residues 8 to 28 and 41 to 61; these read LVFILVIFSTLLVVGIPVTFA and YTGAGIWTGLVLITGLVNSFI.

It belongs to the PsbZ family. PSII is composed of 1 copy each of membrane proteins PsbA, PsbB, PsbC, PsbD, PsbE, PsbF, PsbH, PsbI, PsbJ, PsbK, PsbL, PsbM, PsbT, sbX, PsbY, PsbZ, Psb30/Ycf12, at least 3 peripheral proteins of the oxygen-evolving complex and a large number of cofactors. It forms dimeric complexes.

It localises to the plastid. It is found in the chloroplast thylakoid membrane. Its function is as follows. May control the interaction of photosystem II (PSII) cores with the light-harvesting antenna, regulates electron flow through the 2 photosystem reaction centers. PSII is a light-driven water plastoquinone oxidoreductase, using light energy to abstract electrons from H(2)O, generating a proton gradient subsequently used for ATP formation. The polypeptide is Photosystem II reaction center protein Z (Gracilaria tenuistipitata var. liui (Red alga)).